We begin with the raw amino-acid sequence, 512 residues long: Norfluorocurarine oxidase (512 aa).

A helical membrane pass occupies residues 3 to 23; it reads LLLNPSLFSLLPLLLFIIFLF. Cys453 contacts heme.

Belongs to the cytochrome P450 family. Heme serves as cofactor.

The protein resides in the membrane. It catalyses the reaction norfluorocurarine + reduced [NADPH--hemoprotein reductase] + O2 = 18-hydroxynorfluorocurarine + oxidized [NADPH--hemoprotein reductase] + H2O + H(+). It functions in the pathway alkaloid biosynthesis. In terms of biological role, monooxygenase involved in the biosynthesis of curare monoterpene indole alkaloids (MIAs), natural products such as diaboline, a pharmacologically active compound used to regulate blood pressure. Curare alkaloids act as animal glycine receptor antagonists. Catalyzes the conversion of norfluorocurarine to 18-OH norfluorocurarine. The protein is Norfluorocurarine oxidase of Strychnos sp.